We begin with the raw amino-acid sequence, 507 residues long: Histidine ammonia-lyase (507 aa).

Residues 141 to 143 constitute a cross-link (5-imidazolinone (Ala-Gly)); the sequence is ASG. Ser142 is modified (2,3-didehydroalanine (Ser)).

Belongs to the PAL/histidase family. Contains an active site 4-methylidene-imidazol-5-one (MIO), which is formed autocatalytically by cyclization and dehydration of residues Ala-Ser-Gly.

Its subcellular location is the cytoplasm. The enzyme catalyses L-histidine = trans-urocanate + NH4(+). It participates in amino-acid degradation; L-histidine degradation into L-glutamate; N-formimidoyl-L-glutamate from L-histidine: step 1/3. The chain is Histidine ammonia-lyase from Paraburkholderia phytofirmans (strain DSM 17436 / LMG 22146 / PsJN) (Burkholderia phytofirmans).